The primary structure comprises 155 residues: Polyadenylate-binding protein-interacting protein 5 (155 aa).

The short motif at 7-17 (ALNPHAASYVP) is the PAM2-like element. In terms of domain architecture, CUE spans 66–109 (DIDMDIEYLLVTFSGLSQESITDVYLANGGDLEATIEMLNQLEI). The interval 114–155 (SEENLPETLDIGDISESGPSTSKSTEVAASTSSVIPNAPVSA) is disordered. Positions 130–148 (SGPSTSKSTEVAASTSSVI) are enriched in polar residues.

In terms of tissue distribution, specifically expressed in immature siliques.

Promotes polyploidy in dark-grown seedlings. Regulates the endocycle leading to hypocotyl elongation. The polypeptide is Polyadenylate-binding protein-interacting protein 5 (CID5) (Arabidopsis thaliana (Mouse-ear cress)).